Consider the following 161-residue polypeptide: MISAPSPDHLLLEQDLATPEIRCGEIEERWRHIRTSWPHVFFAVSAPQRPNGPKEFGFRFEYTGYRQTPVTAQLWDLEADAPLPHAKWPTGTYVVPSVFRKDWQQGNCLYIPCDRISIQGHTAWLNDHPSRLWQPARGIICYLEQLYELFNQGDYTGLVSA.

The active-site Glycyl thioester intermediate is the Cys113.

Its function is as follows. Component of the Bil (bacterial ISG15-like) antiviral defense system, composed of BilA, BilB, BilC and BilD. The Bil system specifically conjugates a ubiquitin-like moiety (bilA) to the bacteriophage central tail fiber (CTF, or tip attachment protein J) via reactions involving E1 (bilD) and E2 (bilB). Modifies CTF of phage SECphi27 and SECphi4, which probably interferes with assembly of the phage tail. Also modifies T5 baseplate hub protein pb3 (gene D16), but not gp27 of phage T6 (Bil defends against T6). BilB probably accepts ubiquitin from the BilA-BilD (E1) complex and catalyzes its covalent attachment to target protein (CTF). Bil-encoding bacteria produce mostly defective phage SECphi27, many of which have phage assembly defects, including no tails. SECphi27 phage progeny produced in E.coli with the Bil system inject less DNA into naive host cells, maybe because the phage are less able to adsorb and inject their DNA into host cells. In terms of biological role, expression of the Bil system in E.coli (strain MG1655) confers about 100-fold resistance to phage SECphi27, SECphi18, SECphi6, SECphi4 and T5, but not to SECphi17. When cells expressing the Bil system are infected by phage SECphi27 at low multiplicity of infection (0.03 MOI) the culture survives, at 3.0 MOI the culture collapses at the same time as cells without the Bil system. The sequence is that of Bacterial E2-like ubiquitin protein BilB from Collimonas sp. (strain OK412).